Reading from the N-terminus, the 222-residue chain is Glutathione S-transferase A3 (222 aa).

Residue A2 is modified to N-acetylalanine. Residues 3-83 (GKPKLHYFNG…YIASKYNLYG (81 aa)) enclose the GST N-terminal domain. K4 carries the N6-succinyllysine modification. Glutathione is bound by residues Y9, R45, 54–55 (QV), and 67–68 (QT). The GST C-terminal domain occupies 85-207 (DIKERALIDM…LQPGSPRKPP (123 aa)).

This sequence belongs to the GST superfamily. Alpha family. As to quaternary structure, homodimer.

Its subcellular location is the cytoplasm. The enzyme catalyses RX + glutathione = an S-substituted glutathione + a halide anion + H(+). The catalysed reaction is androst-5-ene-3,17-dione = androst-4-ene-3,17-dione. It carries out the reaction pregn-5-ene-3,20-dione = progesterone. Conjugation of reduced glutathione to a wide number of exogenous and endogenous hydrophobic electrophiles. Catalyzes isomerization reactions that contribute to the biosynthesis of steroid hormones. Efficiently catalyze obligatory double-bond isomerizations of delta(5)-androstene-3,17-dione and delta(5)-pregnene-3,20-dione, precursors to testosterone and progesterone, respectively. Has substantial activity toward aflatoxin B1-8,9-epoxide. The protein is Glutathione S-transferase A3 of Homo sapiens (Human).